Here is a 179-residue protein sequence, read N- to C-terminus: Peroxiredoxin (179 aa).

The 151-residue stretch at Thr-2–Phe-152 folds into the Thioredoxin domain. Cys-56 (cysteine sulfenic acid (-SOH) intermediate (for peroxiredoxin activity)) is an active-site residue.

The protein belongs to the peroxiredoxin family. Prx5 subfamily. As to quaternary structure, monomer.

It carries out the reaction a hydroperoxide + 2 glutathione = an alcohol + glutathione disulfide + H2O. Functionally, thiol-specific peroxidase that catalyzes the reduction of hydrogen peroxide and organic hydroperoxides to water and alcohols, respectively. Plays a role in cell protection against oxidative stress by detoxifying peroxides. The chain is Peroxiredoxin from Rhizobium etli.